The primary structure comprises 227 residues: tRNA (guanine-N(7)-)-methyltransferase (227 aa).

The interval 1 to 21 (MPDMTMKSQPDRLYGRQRGHA) is disordered. Residues glutamate 54, glutamate 79, aspartate 114, and aspartate 136 each contribute to the S-adenosyl-L-methionine site. Residue aspartate 136 is part of the active site. Substrate is bound by residues lysine 140, aspartate 172, and 206–209 (TRYE).

Belongs to the class I-like SAM-binding methyltransferase superfamily. TrmB family.

It carries out the reaction guanosine(46) in tRNA + S-adenosyl-L-methionine = N(7)-methylguanosine(46) in tRNA + S-adenosyl-L-homocysteine. It functions in the pathway tRNA modification; N(7)-methylguanine-tRNA biosynthesis. Functionally, catalyzes the formation of N(7)-methylguanine at position 46 (m7G46) in tRNA. This Granulibacter bethesdensis (strain ATCC BAA-1260 / CGDNIH1) protein is tRNA (guanine-N(7)-)-methyltransferase.